The following is a 557-amino-acid chain: TNF receptor-associated factor 5 (557 aa).

Residues 45–85 form an RING-type zinc finger; sequence CAFCHSVLHNPHQTGCGHRFCQHCILSLRELNTVPICPVDK. 2 TRAF-type zinc fingers span residues 127–181 and 182–239; these read DHLQ…INLQ and NHEE…RNLQ. Residues 237–342 adopt a coiled-coil conformation; the sequence is NLQQHEHSAL…VNQQQNKFDL (106 aa). A Glycyl lysine isopeptide (Lys-Gly) (interchain with G-Cter in ubiquitin) cross-link involves residue lysine 318. An interaction with EIF2AK2/PKR region spans residues 345 to 557; it reads LMEAVDTVKQ…AVDLTDLEDL (213 aa). The 147-residue stretch at 403–549 folds into the MATH domain; the sequence is NGKLIWKVTD…DDTLFLKVAV (147 aa).

This sequence belongs to the TNF receptor-associated factor family. A subfamily. In terms of assembly, homotrimer. Heteromer with TRAF3. Associates with TNFRSF5/CD40 through interaction with TRAF3. Associates with LTBR/TNFRSF3, TNFRSF4, TNFRSF8/CD30, TNFRSF11A/RANK, TNFRSF13B/TACI, TNFRSF14, TNFRSF17, TNFRSF19/TROY, RIPK2, MAP3K14, MAP3K5, and TRAF and TNF receptor associated protein TDP2. Interacts (via C-terminus) with EIF2AK2/PKR (via the kinase catalytic domain). In terms of processing, ubiquitinated at Lys-318 by the SCF(FBXL2) complex, leading to its degradation by the proteasome. Expressed in spleen, thymus, prostate, testis, ovary, small intestine, colon, and peripheral blood.

It is found in the cytoplasm. It localises to the cytosol. Adapter protein and signal transducer that links members of the tumor necrosis factor receptor family to different signaling pathways by association with the receptor cytoplasmic domain and kinases. Mediates activation of NF-kappa-B and probably JNK. Seems to be involved in apoptosis. Plays a role in mediating activation of NF-kappa-B by EIF2AK2/PKR. This is TNF receptor-associated factor 5 (TRAF5) from Homo sapiens (Human).